The primary structure comprises 360 residues: MFLWLAHFSNWLTGLNIFQYTTFRAVMAALTALAFSLMFGPWTIRRLTALKCGQAVRTDGPQTHLVKNGTPTMGGSLILTAITVSTLLWGNWANPYIWILLGVLLATGALGFYDDWRKVVYKDPNGVSAKFKMVWQSSVAVIAGLALFYLAANSANNILIVPFFKQIALPLGVVGFLVLSYLTIVGTSNAVNLTDGLDGLAAFPVVLVAAGLAIFAYVSGHYQFSQYLQLPYVAGANEVAIFCTAMCGACLGFLWFNAYPAQVFMGDVGALALGAALGTVAVIVRQEFVLVIMGGLFVVEAVSVMLQVGWYKKTKKRIFLMAPIHHHYEQKGWKETQVVVRFWIITIVLVLIGLSTLKIR.

10 helical membrane passes run 24 to 44, 69 to 89, 92 to 112, 133 to 153, 158 to 178, 199 to 219, 239 to 259, 263 to 283, 288 to 308, and 337 to 357; these read RAVMAALTALAFSLMFGPWTI, GTPTMGGSLILTAITVSTLLW, WANPYIWILLGVLLATGALGF, MVWQSSVAVIAGLALFYLAAN, ILIVPFFKQIALPLGVVGFLV, GLAAFPVVLVAAGLAIFAYVS, VAIFCTAMCGACLGFLWFNAY, VFMGDVGALALGAALGTVAVI, FVLVIMGGLFVVEAVSVMLQV, and QVVVRFWIITIVLVLIGLSTL.

The protein belongs to the glycosyltransferase 4 family. MraY subfamily. Requires Mg(2+) as cofactor.

The protein localises to the cell inner membrane. It catalyses the reaction UDP-N-acetyl-alpha-D-muramoyl-L-alanyl-gamma-D-glutamyl-meso-2,6-diaminopimeloyl-D-alanyl-D-alanine + di-trans,octa-cis-undecaprenyl phosphate = di-trans,octa-cis-undecaprenyl diphospho-N-acetyl-alpha-D-muramoyl-L-alanyl-D-glutamyl-meso-2,6-diaminopimeloyl-D-alanyl-D-alanine + UMP. It participates in cell wall biogenesis; peptidoglycan biosynthesis. Catalyzes the initial step of the lipid cycle reactions in the biosynthesis of the cell wall peptidoglycan: transfers peptidoglycan precursor phospho-MurNAc-pentapeptide from UDP-MurNAc-pentapeptide onto the lipid carrier undecaprenyl phosphate, yielding undecaprenyl-pyrophosphoryl-MurNAc-pentapeptide, known as lipid I. The sequence is that of Phospho-N-acetylmuramoyl-pentapeptide-transferase from Neisseria gonorrhoeae (strain ATCC 700825 / FA 1090).